The sequence spans 255 residues: NAD kinase (255 aa).

The active-site Proton acceptor is the Asp-44. Residues 44–45 (DG), His-49, 114–115 (NE), Asp-144, Ala-152, 155–160 (SAYNLS), and Gln-216 contribute to the NAD(+) site.

This sequence belongs to the NAD kinase family. A divalent metal cation serves as cofactor.

The protein localises to the cytoplasm. The catalysed reaction is NAD(+) + ATP = ADP + NADP(+) + H(+). Its function is as follows. Involved in the regulation of the intracellular balance of NAD and NADP, and is a key enzyme in the biosynthesis of NADP. Catalyzes specifically the phosphorylation on 2'-hydroxyl of the adenosine moiety of NAD to yield NADP. The sequence is that of NAD kinase from Rickettsia canadensis (strain McKiel).